Here is a 251-residue protein sequence, read N- to C-terminus: Hydroxyacylglutathione hydrolase (251 aa).

Residues H53, H55, D57, H58, H110, D127, and H165 each coordinate Zn(2+).

Belongs to the metallo-beta-lactamase superfamily. Glyoxalase II family. As to quaternary structure, monomer. Requires Zn(2+) as cofactor.

It carries out the reaction an S-(2-hydroxyacyl)glutathione + H2O = a 2-hydroxy carboxylate + glutathione + H(+). It participates in secondary metabolite metabolism; methylglyoxal degradation; (R)-lactate from methylglyoxal: step 2/2. Its function is as follows. Thiolesterase that catalyzes the hydrolysis of S-D-lactoyl-glutathione to form glutathione and D-lactic acid. The chain is Hydroxyacylglutathione hydrolase from Salmonella agona (strain SL483).